Reading from the N-terminus, the 274-residue chain is Large ribosomal subunit protein uL2cz (274 aa).

2 disordered regions span residues 1-25 (MAIHLYKTSTPSTRNGTVDSQVKSN) and 224-274 (NPVD…RRSK). Residues 7–25 (KTSTPSTRNGTVDSQVKSN) are compositionally biased toward polar residues.

Belongs to the universal ribosomal protein uL2 family. In terms of assembly, part of the 50S ribosomal subunit.

It localises to the plastid. The protein localises to the chloroplast. This chain is Large ribosomal subunit protein uL2cz (rpl2-A), found in Atropa belladonna (Belladonna).